We begin with the raw amino-acid sequence, 439 residues long: SET domain-containing protein 4 (439 aa).

Over residues 1-19 the composition is skewed to basic residues; the sequence is MQRRRGRTERARKRRRRSS. A disordered region spans residues 1 to 25; that stretch reads MQRRRGRTERARKRRRRSSGSRAVN. The 226-residue stretch at 47–272 folds into the SET domain; that stretch reads TDLVPASFPG…KHQEVFICYG (226 aa). Tyr-271 lines the S-adenosyl-L-methionine pocket.

This sequence belongs to the class V-like SAM-binding methyltransferase superfamily. SETD4 family. As to quaternary structure, forms a ternary complex with TBK1 and ZNF268; the interaction with TBK1 is ZNF268-dependent and leads to TBK1 monomethylation. In terms of tissue distribution, expressed in the forebrain subventricular zone, in quiescent neural stem cells.

It localises to the cytoplasm. Its subcellular location is the cytosol. The protein localises to the nucleus. The catalysed reaction is L-lysyl(4)-[histone H3] + S-adenosyl-L-methionine = N(6)-methyl-L-lysyl(4)-[histone H3] + S-adenosyl-L-homocysteine + H(+). It carries out the reaction N(6)-methyl-L-lysyl(4)-[histone H3] + S-adenosyl-L-methionine = N(6),N(6)-dimethyl-L-lysyl(4)-[histone H3] + S-adenosyl-L-homocysteine + H(+). It catalyses the reaction L-lysyl(20)-[histone H4] + S-adenosyl-L-methionine = N(6)-methyl-L-lysyl(20)-[histone H4] + S-adenosyl-L-homocysteine + H(+). The enzyme catalyses N(6)-methyl-L-lysyl(20)-[histone H4] + S-adenosyl-L-methionine = N(6),N(6)-dimethyl-L-lysyl(20)-[histone H4] + S-adenosyl-L-homocysteine + H(+). The catalysed reaction is N(6),N(6)-dimethyl-L-lysyl(20)-[histone H4] + S-adenosyl-L-methionine = N(6),N(6),N(6)-trimethyl-L-lysyl(20)-[histone H4] + S-adenosyl-L-homocysteine + H(+). It carries out the reaction L-lysyl-[protein] + S-adenosyl-L-methionine = N(6)-methyl-L-lysyl-[protein] + S-adenosyl-L-homocysteine + H(+). Functionally, protein-lysine N-methyltransferase that methylates both histones and non-histone proteins. Via its catalytic activity, regulates many processes, including cell proliferation, cell differentiation, inflammatory response and apoptosis. Regulates the inflammatory response by mediating mono- and dimethylation of 'Lys-4' of histone H3 (H3K4me1 and H3K4me2, respectively), leading to activate the transcription of pro-inflammatory cytokines IL6 and TNF-alpha. Also involved in the regulation of stem cell quiescence by catalyzing the trimethylation of 'Lys-20' of histone H4 (H4K20me3), thereby promoting heterochromatin formation. In the brain, epigenetically controls quiescence of neural stem cells for sustaining a protected neural stem cell population and maintaining a stem cell reservoir for neurogenesis. Involved in proliferation, migration, paracrine and myogenic differentiation of bone marrow mesenchymal stem cells (BMSCs). Through the catalysis of XRCC5/Ku70 trimethylation, regulates BAX-mediated apoptosis. SETD4-catalyzed XRCC5 methylation results in XRCC5 translocation to the cytoplasm, where it interacts with BAX, sequestering it from the mitochondria, hence preventing BAX-mediated apoptosis. In Mus musculus (Mouse), this protein is SET domain-containing protein 4.